Here is a 497-residue protein sequence, read N- to C-terminus: Serine/threonine-protein kinase cst-1 (497 aa).

A disordered region spans residues 1–27; the sequence is MPPSTDSSRRNSEEGSSDGFKLDSSAL. The region spanning 35–286 is the Protein kinase domain; the sequence is FDIVGKLGEG…ALRLCEHTFI (252 aa). Residues 41–49 and K64 contribute to the ATP site; that span reads LGEGSYGSV. Catalysis depends on D154, which acts as the Proton acceptor. Positions 367 to 416 are disordered; it reads KSAYIPGSSKNGNSPRVQPPGHTASASDPSKNQPFAQDGTGPNFQLGTSE. Positions 390 to 416 are enriched in polar residues; sequence ASASDPSKNQPFAQDGTGPNFQLGTSE. The 48-residue stretch at 446–493 folds into the SARAH domain; sequence FEFLRNITLDELIRRKESLDSEMEEEIRELQRRYKTKRQPILDVIEIK. Positions 450 to 486 form a coiled coil; sequence RNITLDELIRRKESLDSEMEEEIRELQRRYKTKRQPI.

The protein belongs to the protein kinase superfamily. STE Ser/Thr protein kinase family. STE20 subfamily. Interacts with rsf-1 (via SARAH domain); the interaction is required for the phosphorylation of cst-1. Requires Mg(2+) as cofactor. Post-translationally, proteolytically cleaved by caspase-3 during apoptosis which results in kinase activation. Phosphorylated. Widely expressed in epidermal cells.

The enzyme catalyses L-seryl-[protein] + ATP = O-phospho-L-seryl-[protein] + ADP + H(+). It carries out the reaction L-threonyl-[protein] + ATP = O-phospho-L-threonyl-[protein] + ADP + H(+). Serine/threonine-protein kinase which extends lifespan and delays tissue aging, probably by activating daf-16. This chain is Serine/threonine-protein kinase cst-1, found in Caenorhabditis elegans.